Here is a 71-residue protein sequence, read N- to C-terminus: Long neurotoxin 1 (71 aa).

Intrachain disulfides connect C3/C20, C14/C41, C26/C30, C45/C56, and C57/C62.

This sequence belongs to the three-finger toxin family. Long-chain subfamily. Type II alpha-neurotoxin sub-subfamily. Expressed by the venom gland.

It localises to the secreted. In terms of biological role, binds with high affinity to muscular (alpha-1/CHRNA1) and neuronal (alpha-7/CHRNA7) nicotinic acetylcholine receptor (nAChR) and hinders acetylcholine binding to the receptor, thereby impairing neuromuscular and neuronal transmission. In Naja annulata annulata (Banded water cobra), this protein is Long neurotoxin 1.